We begin with the raw amino-acid sequence, 187 residues long: Biogenesis of lysosome-related organelles complex 1 subunit 5 (187 aa).

The disordered stretch occupies residues 1-26 (MSGGGTETPVGCEAAPGGGSKKRDSL). S2 carries the N-acetylserine modification. The stretch at 154-186 (NKRAEVDEEHRKAMERLKEQYAEMEKDLAKFST) forms a coiled coil.

This sequence belongs to the BLOC1S5 family. In terms of assembly, interacts with BLOC1S4, DTNBP1/BLOC1S7 and PI4K2A. Component of the biogenesis of lysosome-related organelles complex 1 (BLOC-1) composed of BLOC1S1, BLOC1S2, BLOC1S3, BLOC1S4, BLOC1S5, BLOC1S6, DTNBP1/BLOC1S7 and SNAPIN/BLOC1S8. Octamer composed of one copy each BLOC1S1, BLOC1S2, BLOC1S3, BLOC1S4, BLOC1S5, BLOC1S6, DTNBP1/BLOC1S7 and SNAPIN/BLOC1S8. The BLOC-1 complex associates with the AP-3 protein complex and membrane protein cargos. Interacts with BLOC1S6.

Its function is as follows. Component of the BLOC-1 complex, a complex that is required for normal biogenesis of lysosome-related organelles (LRO), such as platelet dense granules and melanosomes. In concert with the AP-3 complex, the BLOC-1 complex is required to target membrane protein cargos into vesicles assembled at cell bodies for delivery into neurites and nerve terminals. The BLOC-1 complex, in association with SNARE proteins, is also proposed to be involved in neurite extension. Plays a role in intracellular vesicle trafficking. The sequence is that of Biogenesis of lysosome-related organelles complex 1 subunit 5 from Homo sapiens (Human).